A 108-amino-acid chain; its full sequence is UPF0145 protein YjfJ (108 aa).

It belongs to the UPF0145 family.

The protein is UPF0145 protein YjfJ (yjfJ) of Lactococcus lactis subsp. lactis (strain IL1403) (Streptococcus lactis).